Here is a 344-residue protein sequence, read N- to C-terminus: Probable pectinesterase 67 (344 aa).

Residues 1-23 (MGHRTRMILVLTLVVMSIWGSDA) form the signal peptide. Asparagine 43 and asparagine 151 each carry an N-linked (GlcNAc...) asparagine glycan. Glutamine 152 contributes to the substrate binding site. The Nucleophile role is filled by aspartate 196. Arginine 256 provides a ligand contact to substrate. An N-linked (GlcNAc...) asparagine glycan is attached at asparagine 282.

It belongs to the pectinesterase family. As to expression, expressed in flower buds.

The protein resides in the secreted. Its subcellular location is the cell wall. It catalyses the reaction [(1-&gt;4)-alpha-D-galacturonosyl methyl ester](n) + n H2O = [(1-&gt;4)-alpha-D-galacturonosyl](n) + n methanol + n H(+). It functions in the pathway glycan metabolism; pectin degradation; 2-dehydro-3-deoxy-D-gluconate from pectin: step 1/5. Acts in the modification of cell walls via demethylesterification of cell wall pectin. The polypeptide is Probable pectinesterase 67 (PME67) (Arabidopsis thaliana (Mouse-ear cress)).